Consider the following 753-residue polypeptide: Catalase-peroxidase (753 aa).

The tryptophyl-tyrosyl-methioninium (Trp-Tyr) (with M-269) cross-link spans tryptophan 91 to tyrosine 243. The active-site Proton acceptor is the histidine 92. The segment at residues tyrosine 243 to methionine 269 is a cross-link (tryptophyl-tyrosyl-methioninium (Tyr-Met) (with W-91)). Histidine 284 provides a ligand contact to heme b.

It belongs to the peroxidase family. Peroxidase/catalase subfamily. As to quaternary structure, homodimer or homotetramer. Heme b serves as cofactor. Formation of the three residue Trp-Tyr-Met cross-link is important for the catalase, but not the peroxidase activity of the enzyme.

The enzyme catalyses H2O2 + AH2 = A + 2 H2O. It catalyses the reaction 2 H2O2 = O2 + 2 H2O. Functionally, bifunctional enzyme with both catalase and broad-spectrum peroxidase activity. In Paraburkholderia xenovorans (strain LB400), this protein is Catalase-peroxidase.